The primary structure comprises 89 residues: Antimicrobial peptide Ar-AMP (89 aa).

The first 25 residues, Met-1–Gly-25, serve as a signal peptide directing secretion. One can recognise a Chitin-binding type-1 domain in the interval Ala-26–Ala-68. 3 disulfide bridges follow: Cys-29-Cys-40, Cys-34-Cys-46, and Cys-39-Cys-53. A propeptide spans Ala-56–Pro-89 (removed in mature form).

Functionally, chitin-binding protein that inhibits the growth of the fungal pathogens B.cinerea, F.culmorum, H.sativum and A.consortiale, but not that of R.solani. Induces morphological changes in the fungal pathogens F.culmorum, H.sativum and R.solani, but not in A.consortiale and B.cinerea. Has antibacterial activity against the Gram-positive bacterium B.subtilis, but lacks antibacterial activity against the Gram-negative bacterium E.coli. This chain is Antimicrobial peptide Ar-AMP, found in Amaranthus retroflexus (Redroot amaranth).